Consider the following 156-residue polypeptide: Small ribosomal subunit protein bS16 (156 aa).

Positions 85 to 120 are enriched in basic and acidic residues; it reads GESGAEGTLKSKSEKEAFVAPERDSVILPEEPKQEE. The segment at 85–156 is disordered; that stretch reads GESGAEGTLK…APAEDAEKSE (72 aa). Residues 132–150 show a composition bias toward acidic residues; the sequence is PAEEAAEAPAEEAAEAPAE.

This sequence belongs to the bacterial ribosomal protein bS16 family.

This is Small ribosomal subunit protein bS16 from Micrococcus luteus (strain ATCC 4698 / DSM 20030 / JCM 1464 / CCM 169 / CCUG 5858 / IAM 1056 / NBRC 3333 / NCIMB 9278 / NCTC 2665 / VKM Ac-2230) (Micrococcus lysodeikticus).